The sequence spans 463 residues: Quinolone resistance protein NorB (463 aa).

The next 14 membrane-spanning stretches (helical) occupy residues 17–37 (IGIVLSVITFWLFAQSLVNVV), 53–73 (IAVSITALFSGMFVVGAGGLA), 86–106 (IILNILGSLLIIISNIPLLLI), 107–127 (IGRLIQGLSAACIMPATLSII), 142–162 (YWSIGSWGGSGVCSFFGGAVA), 165–185 (LGWRWIFILSIIISLIALFLI), 201–221 (FDIKGLVLLVIMLLSLNILIT), 230–250 (SLLFITLLAIAIGSFSLFIVL), 273–293 (TASNFLLNGVAGTLIVANTFV), 299–319 (YSSLQAGSLSITYLVMVLIMI), 334–354 (PMLIGTGVLIVGECLISLTFL), 357–377 (IFYVICCIIGYLFFGLGLGIY), 403–423 (MASALGGAFGVALSGAVYAIV), and 435–455 (IALWLNAGMGILSFVIILLLV).

Belongs to the major facilitator superfamily. TCR/Tet family.

The protein localises to the cell membrane. Functionally, multidrug efflux pump that acts independently of NorA and is one of the factors that confers resistance against diverse quinolones and chemical compounds. The polypeptide is Quinolone resistance protein NorB (norB) (Staphylococcus aureus (strain USA300)).